The primary structure comprises 758 residues: CRISPR system single-strand-specific deoxyribonuclease Cas10/Csm1 (subtype III-A) (758 aa).

An HD domain region spans residues 1 to 82; that stretch reads MKKEKIDLFY…TYIADNIASG (82 aa). Residues 509–647 enclose the GGDEF domain; the sequence is KRLAVVRLDV…EKDSISLFSS (139 aa).

Belongs to the CRISPR-associated Cas10/Csm1 family. Part of the Csm effector complex that includes at least Cas10(1), Csm2(3), Csm3(5), Csm4(1), Csm5(1) and mature crRNA. The Csm complex is elongated and slightly twisted with a maximal length of 215 Angstroms and a diameter of 75-80 Angstroms. It has been modeled to have a central protein filamant of Csm3 subunits along which the dsRNA helix of paired crRNA and target RNA binds. The filament is capped at one end by Cas10 and Csm4 and at the other end by Csm5; ssDNA is thought to bind to the N-terminal HD domain of Cas10. Csm with a precursor crRNA does not include Csm5, while Cas6, the enzyme probably involved in pre-crRNA processing, is found associated with a subset of the Csm complex. It depends on a divalent metal cation as a cofactor.

It carries out the reaction 6 ATP = cyclic hexaadenylate + 6 diphosphate. With respect to regulation, ssDNase activity is activated by target RNA binding to the Csm-crRNA complex and is inhibited by EDTA. CRISPR (clustered regularly interspaced short palindromic repeat) is an adaptive immune system that provides protection against mobile genetic elements (viruses, transposable elements and conjugative plasmids). CRISPR clusters contain spacers, sequences complementary to antecedent mobile elements, and target invading nucleic acids. CRISPR clusters are transcribed and processed into CRISPR RNA (crRNA). The type III-A Csm effector complex binds crRNA and acts as a crRNA-guided RNase, DNase and cyclic oligoadenylate synthase; binding of target RNA cognate to the crRNA is required for all activities. In a heterologous host this Csm effector complex restricts ssRNA phage MS2, suggesting it may target RNA viruses in vivo. In terms of biological role, csm functions as a non-specific ssDNase. Base-pairing between crRNA and target RNA to form a ternary Csm complex activates a ssDNase activity; target RNA cleavage suppresses the ssDNase, a temporal control that prevents uncontrolled DNA degradation. Viral RNA transcripts probably tether the Csm complex to the viral genome, recruiting Cas10 ssDNA activity which is able to degrade DNA in the transcription bubble, spatially controlling the DNase activity. Its function is as follows. This subunit has a weak ssDNase activity that is dramatically activated by the ternary Csm effector complex (the crRNA, Cas proteins and a cognate target ssRNA). Target RNA and ssDNA are cleaved simultaneously, although RNase activity (of Csm3) is much faster. RNA cleavage by Csm3 is not required for ssDNase activity as Csm complex with inactive Csm3 still has ssDNase activity; however as the cleaved target RNA products dissociate away ssDNase activity decreases. Self-recognition, with subsequent repression of the ssDNase activity, occurs when the 5' handle of the crRNA bases pairs with the 3' flanking sequence of the target RNA (which would occur if the CRISPR locus were transcribed as an anti-pre-crRNA). This protein has low activity on dsDNA which is not stimulated by the Csm complex. Functionally, this subunit is a single-strand-specific deoxyribonuclease (ssDNase) which digests both linear and circular ssDNA; it has both exo- and endonuclease activity. When associated with the ternary Csm effector complex (the crRNA, Cas proteins and a cognate target ssRNA) synthesizes cyclic oligoadenylates (cOA) from ATP, producing cyclic triadenylate (cA3) up to cyclic hexaadenylate (cA6), which is the active cOA. The enzyme is also able to cyclize pppA3 up to pppA6. cOAs are second messengers that induce an antiviral state important for defense against invading nucleic acids. Synthesis of cOA can occur with AMP plus ATP, 2'dATP or 3'dATP (but no other nucleotides), and requires a free 3'-OH ribose moiety. This is CRISPR system single-strand-specific deoxyribonuclease Cas10/Csm1 (subtype III-A) from Streptococcus thermophilus.